A 78-amino-acid chain; its full sequence is Acyl carrier protein (78 aa).

Positions 2 to 77 (STIEERVKKI…EAIDYINAHA (76 aa)) constitute a Carrier domain. At serine 37 the chain carries O-(pantetheine 4'-phosphoryl)serine.

It belongs to the acyl carrier protein (ACP) family. 4'-phosphopantetheine is transferred from CoA to a specific serine of apo-ACP by AcpS. This modification is essential for activity because fatty acids are bound in thioester linkage to the sulfhydryl of the prosthetic group.

Its subcellular location is the cytoplasm. The protein operates within lipid metabolism; fatty acid biosynthesis. In terms of biological role, carrier of the growing fatty acid chain in fatty acid biosynthesis. The chain is Acyl carrier protein from Stutzerimonas stutzeri (strain A1501) (Pseudomonas stutzeri).